We begin with the raw amino-acid sequence, 444 residues long: Phosphoglucosamine mutase (444 aa).

Ser102 (phosphoserine intermediate) is an active-site residue. Mg(2+) is bound by residues Ser102, Asp241, Asp243, and Asp245. The residue at position 102 (Ser102) is a Phosphoserine.

The protein belongs to the phosphohexose mutase family. Mg(2+) is required as a cofactor. In terms of processing, activated by phosphorylation.

It carries out the reaction alpha-D-glucosamine 1-phosphate = D-glucosamine 6-phosphate. Its function is as follows. Catalyzes the conversion of glucosamine-6-phosphate to glucosamine-1-phosphate. In Haemophilus ducreyi (strain 35000HP / ATCC 700724), this protein is Phosphoglucosamine mutase.